The chain runs to 230 residues: Response regulator MprA (230 aa).

One can recognise a Response regulatory domain in the interval arginine 4–leucine 118. Aspartate 48 carries the post-translational modification 4-aspartylphosphate. Residues serine 129–glutamate 227 constitute a DNA-binding region (ompR/PhoB-type).

Post-translationally, phosphorylated and dephosphorylated by MprB.

It localises to the cytoplasm. Functionally, member of the two-component regulatory system MprB/MprA which contributes to maintaining a balance among several systems involved in stress resistance and is required for establishment and maintenance of persistent infection in the host. Functions as a transcriptional regulator that recognizes a 19-bp nucleotide motif comprizing two loosely conserved 8-bp direct DNA-binding motif repeats separated by a 3-bp spacer region. The polypeptide is Response regulator MprA (mprA) (Mycobacterium sp. (strain JLS)).